Here is a 168-residue protein sequence, read N- to C-terminus: Probable chemoreceptor glutamine deamidase CheD 2 (168 aa).

It belongs to the CheD family.

It carries out the reaction L-glutaminyl-[protein] + H2O = L-glutamyl-[protein] + NH4(+). In terms of biological role, probably deamidates glutamine residues to glutamate on methyl-accepting chemotaxis receptors (MCPs), playing an important role in chemotaxis. The polypeptide is Probable chemoreceptor glutamine deamidase CheD 2 (Leptospira interrogans serogroup Icterohaemorrhagiae serovar copenhageni (strain Fiocruz L1-130)).